A 443-amino-acid chain; its full sequence is ATP-dependent protease ATPase subunit HslU (443 aa).

ATP contacts are provided by residues Ile-19, 61 to 66 (GVGKTE), Asp-256, Glu-321, and Arg-393.

It belongs to the ClpX chaperone family. HslU subfamily. As to quaternary structure, a double ring-shaped homohexamer of HslV is capped on each side by a ring-shaped HslU homohexamer. The assembly of the HslU/HslV complex is dependent on binding of ATP.

The protein localises to the cytoplasm. Its function is as follows. ATPase subunit of a proteasome-like degradation complex; this subunit has chaperone activity. The binding of ATP and its subsequent hydrolysis by HslU are essential for unfolding of protein substrates subsequently hydrolyzed by HslV. HslU recognizes the N-terminal part of its protein substrates and unfolds these before they are guided to HslV for hydrolysis. This Cupriavidus pinatubonensis (strain JMP 134 / LMG 1197) (Cupriavidus necator (strain JMP 134)) protein is ATP-dependent protease ATPase subunit HslU.